We begin with the raw amino-acid sequence, 577 residues long: Arginine--tRNA ligase (577 aa).

The 'HIGH' region motif lies at 122–132; sequence PNVAKEMHVGH.

It belongs to the class-I aminoacyl-tRNA synthetase family. As to quaternary structure, monomer.

Its subcellular location is the cytoplasm. It carries out the reaction tRNA(Arg) + L-arginine + ATP = L-arginyl-tRNA(Arg) + AMP + diphosphate. The protein is Arginine--tRNA ligase of Escherichia coli O7:K1 (strain IAI39 / ExPEC).